Consider the following 120-residue polypeptide: Large ribosomal subunit protein uL18 (120 aa).

Residues 1–23 are disordered; the sequence is MKLSRKESVRRRHQRVRRKINGT. A compositionally biased stretch (basic residues) spans 8 to 20; it reads SVRRRHQRVRRKI.

It belongs to the universal ribosomal protein uL18 family. Part of the 50S ribosomal subunit; part of the 5S rRNA/L5/L18/L25 subcomplex. Contacts the 5S and 23S rRNAs.

Functionally, this is one of the proteins that bind and probably mediate the attachment of the 5S RNA into the large ribosomal subunit, where it forms part of the central protuberance. This is Large ribosomal subunit protein uL18 from Microcystis aeruginosa (strain NIES-843 / IAM M-2473).